The primary structure comprises 417 residues: Serine/threonine-protein kinase SBK1 (417 aa).

Residues 53–318 (YELVRELGKG…VFRFLKHELT (266 aa)) enclose the Protein kinase domain. ATP-binding positions include 59–67 (LGKGTYGKV) and Lys-82. Asp-174 functions as the Proton acceptor in the catalytic mechanism. Residues 321 to 405 (LRRRPSHRAR…TDGRTDKSKG (85 aa)) form a disordered region. Pro residues predominate over residues 363–382 (PSPPSVGPVVPVPVPVPVPV).

Belongs to the protein kinase superfamily. Ser/Thr protein kinase family.

It is found in the cytoplasm. The catalysed reaction is L-seryl-[protein] + ATP = O-phospho-L-seryl-[protein] + ADP + H(+). The enzyme catalyses L-threonyl-[protein] + ATP = O-phospho-L-threonyl-[protein] + ADP + H(+). Its function is as follows. May be involved in signal-transduction pathways related to the control of brain development. This Mus musculus (Mouse) protein is Serine/threonine-protein kinase SBK1 (Sbk1).